Reading from the N-terminus, the 784-residue chain is Cell wall protein Lmo0130 (784 aa).

An N-terminal signal peptide occupies residues 1–34; the sequence is MKVNKFFKKTTHVLLVAGLTIGLTAPFTGTTAQA. The segment at 690–761 is disordered; sequence ATTPPDNGNG…NTSLPTTGDT (72 aa). The span at 697–729 shows a compositional bias: gly residues; the sequence is GNGGTDNGNGNGNNGGTDGNGGTNNGNGSGTNG. Residues 730-759 show a composition bias toward low complexity; it reads GTTTTEDPTTTTSNTSTTGTSSNTSLPTTG. Positions 755–759 match the LPXTG sorting signal motif; sequence LPTTG. Residue Thr-758 is modified to Pentaglycyl murein peptidoglycan amidated threonine. A propeptide spans 759–784 (removed by sortase A); that stretch reads GDTAGLATVFGVILTTTALYVLRKRS.

The protein resides in the secreted. It is found in the cell wall. The chain is Cell wall protein Lmo0130 from Listeria monocytogenes serovar 1/2a (strain ATCC BAA-679 / EGD-e).